A 441-amino-acid polypeptide reads, in one-letter code: Bacteria-responsive protein 1 (441 aa).

The signal sequence occupies residues 1 to 18 (MWFFKVGALLFLAALVSA). Asn20 is a glycosylation site (N-linked (GlcNAc...) asparagine). The GH18 domain maps to 25 to 441 (PKVLCYYDGQ…PILRAAKYRL (417 aa)). Cys29 and Cys56 are joined by a disulfide. Residue Asn225 is glycosylated (N-linked (GlcNAc...) asparagine).

The protein belongs to the glycosyl hydrolase 18 family. IDGF subfamily. Salivary gland (at protein level).

Its subcellular location is the secreted. Its function is as follows. Promotes recruitment of host neutrophils at the bite site. Induces expression of IL1B and IL6 in the skin of the host. In terms of biological role, (Microbial infection) Enhances Zika virus replication and exacerbates disease pathogenesis in the host. The chain is Bacteria-responsive protein 1 from Aedes aegypti (Yellowfever mosquito).